A 360-amino-acid polypeptide reads, in one-letter code: Sphingolipid delta(4)-desaturase (360 aa).

Transmembrane regions (helical) follow at residues 67–87 (AVVLLQLSIAYALKNTPVLSF), 89–109 (FLALAYVVGATANQNCFLCIH), and 125–145 (LFAIWVNLPIGVPYSASFQPY). The Histidine box-1 motif lies at 109–113 (HELSH). Residues 146-150 (HQLHH) carry the Histidine box-2 motif. The next 3 membrane-spanning stretches (helical) occupy residues 170–190 (VLSSLLGKAFFATFQIFFYAL), 202–222 (FIHLLNVLVCLVSDFILIKFG), and 228–248 (WYLILSSFFAGSLHPTAGHFI). The Histidine box-3 motif lies at 288–292 (HNEHH).

It belongs to the fatty acid desaturase type 1 family. DEGS subfamily.

It localises to the membrane. It carries out the reaction an N-acylsphinganine + 2 Fe(II)-[cytochrome b5] + O2 + 2 H(+) = an N-acylsphing-4-enine + 2 Fe(III)-[cytochrome b5] + 2 H2O. The protein operates within lipid metabolism; sphingolipid metabolism. In terms of biological role, delta(4)-fatty-acid desaturase which introduces a double bond at the 4-position in the long-chain base (LCB) of ceramides. Required for the formation of the monounsaturated sphingoid base (E)-sphing-4-enine during glucosylceramide (GluCer) biosynthesis. The sequence is that of Sphingolipid delta(4)-desaturase from Komagataella phaffii (strain GS115 / ATCC 20864) (Yeast).